We begin with the raw amino-acid sequence, 157 residues long: Protein Smg homolog (157 aa).

It belongs to the Smg family.

The protein is Protein Smg homolog of Shewanella loihica (strain ATCC BAA-1088 / PV-4).